The chain runs to 240 residues: BLOC-1-related complex subunit 8 homolog (240 aa).

2 disordered regions span residues 1–33 and 163–240; these read MSSI…GSHG and KTFS…EKIN. Composition is skewed to low complexity over residues 7–26 and 163–179; these read SSTG…NNIS and KTFS…QQQQ. Positions 180–190 are enriched in polar residues; the sequence is TNLTPSKPTLS. A compositionally biased stretch (low complexity) spans 196 to 205; the sequence is DNNNNNNNLN. The segment covering 208 to 240 has biased composition (basic and acidic residues); that stretch reads EKIEKEEKIEKEDEGKEKDEKEKDDKDLNEKIN. A coiled-coil region spans residues 211–239; the sequence is EKEEKIEKEDEGKEKDEKEKDDKDLNEKI.

It belongs to the BORCS8 family.

The protein localises to the lysosome membrane. In terms of biological role, may participate in the coupling of lysosomes to microtubule plus-end-directed kinesin motor. The chain is BLOC-1-related complex subunit 8 homolog from Dictyostelium discoideum (Social amoeba).